Reading from the N-terminus, the 78-residue chain is Translation initiation factor IF-1 (78 aa).

Residues 2-78 (SKNNLNETES…TRARITYRFK (77 aa)) enclose the S1-like domain.

This sequence belongs to the IF-1 family. In terms of assembly, component of the 30S ribosomal translation pre-initiation complex which assembles on the 30S ribosome in the order IF-2 and IF-3, IF-1 and N-formylmethionyl-tRNA(fMet); mRNA recruitment can occur at any time during PIC assembly.

The protein resides in the cytoplasm. One of the essential components for the initiation of protein synthesis. Stabilizes the binding of IF-2 and IF-3 on the 30S subunit to which N-formylmethionyl-tRNA(fMet) subsequently binds. Helps modulate mRNA selection, yielding the 30S pre-initiation complex (PIC). Upon addition of the 50S ribosomal subunit IF-1, IF-2 and IF-3 are released leaving the mature 70S translation initiation complex. This chain is Translation initiation factor IF-1, found in Onion yellows phytoplasma (strain OY-M).